Reading from the N-terminus, the 320-residue chain is Peroxidase 66 (320 aa).

A signal peptide spans 1-29; that stretch reads MAASVSASCLNRLSSLAVVLVALASAASA. The residue at position 30 (glutamine 30) is a Pyrrolidone carboxylic acid. 4 cysteine pairs are disulfide-bonded: cysteine 40/cysteine 118, cysteine 73/cysteine 78, cysteine 124/cysteine 315, and cysteine 202/cysteine 227. The active-site Proton acceptor is histidine 71. Residues aspartate 72, valine 75, glycine 77, aspartate 79, and serine 81 each contribute to the Ca(2+) site. N-linked (GlcNAc...) asparagine glycosylation is found at asparagine 85 and asparagine 96. Proline 165 contributes to the substrate binding site. Histidine 195 is a heme b binding site. A Ca(2+)-binding site is contributed by threonine 196. Asparagine 211 is a glycosylation site (N-linked (GlcNAc...) asparagine). The Ca(2+) site is built by aspartate 239, threonine 242, and aspartate 247.

Belongs to the peroxidase family. Classical plant (class III) peroxidase subfamily. Heme b is required as a cofactor. Ca(2+) serves as cofactor.

The protein resides in the secreted. It carries out the reaction 2 a phenolic donor + H2O2 = 2 a phenolic radical donor + 2 H2O. Its function is as follows. Removal of H(2)O(2), oxidation of toxic reductants, biosynthesis and degradation of lignin, suberization, auxin catabolism, response to environmental stresses such as wounding, pathogen attack and oxidative stress. These functions might be dependent on each isozyme/isoform in each plant tissue. The protein is Peroxidase 66 (PER66) of Zea mays (Maize).